We begin with the raw amino-acid sequence, 706 residues long: Choline transporter-like protein 2 (706 aa).

The Cytoplasmic portion of the chain corresponds to 1 to 33 (MGKEQQLYYGKHGTPQKYDPAFRGPIYNRGCTD). Position 14 is a phosphothreonine (threonine 14). Residues 34-54 (IICCVFLFLAIVGYVAVGIIA) traverse the membrane as a helical segment. The Extracellular segment spans residues 55 to 232 (WTHGDPRKVI…RIFEDYTVSW (178 aa)). N-linked (GlcNAc...) asparagine glycans are attached at residues asparagine 187 and asparagine 200. A helical transmembrane segment spans residues 233-253 (YWIIIGLIIAMVLSLLFIILL). Topologically, residues 254–256 (RFL) are cytoplasmic. Residues 257 to 277 (AGIMVWVMIVMVILVLGYGIL) form a helical membrane-spanning segment. Residues 278–315 (HCYMEYARLRGEAGSDVSLVDLGFQTDFRVYLHLRQTW) are Extracellular-facing. A helical membrane pass occupies residues 316–336 (VAFMIILSIVEVIIILLLIFL). Topologically, residues 337-364 (RKRILIAIALIKEASRAVGYVMCSLLYP) are cytoplasmic. The chain crosses the membrane as a helical span at residues 365 to 385 (LVTFFLLCLCIAYWASTAIFL). The Extracellular segment spans residues 386–457 (STSNEAVYKI…FNVFMFFWLA (72 aa)). Asparagine 397 and asparagine 417 each carry an N-linked (GlcNAc...) asparagine glycan. Residues 458 to 480 (NFVLALGQVTLAGAFASYYWAMN) form a helical membrane-spanning segment. The Cytoplasmic segment spans residues 481–504 (KPDDLPAFPLFSAFGRALRYHTGS). The chain crosses the membrane as a helical span at residues 505–525 (LAFGSLLLAIVQVIRVILEYL). The Extracellular segment spans residues 526-563 (DQRLKAAENKFAKFLMSCLKCCFWCLEKFIKFLNRNAY). Residues 564–584 (IMIAIYGTNFCTSARNAFFLL) traverse the membrane as a helical segment. Topologically, residues 585–599 (MRNIIRVAVLDKVTD) are cytoplasmic. A helical transmembrane segment spans residues 600–620 (FLFLLGKLLIVGSVGILAFFF). Over 621 to 638 (FTHRIRIVQDTAPSLNYY) the chain is Extracellular. Residues 639-659 (WVPVVTVVIGSYLIAHGFFSV) form a helical membrane-spanning segment. At 660-706 (YGMCVDTLFLCFLEDLERNDGTPERPYFMSLTLKKILNKTNKRQAEA) the chain is on the cytoplasmic side.

The protein belongs to the CTL (choline transporter-like) family. As to quaternary structure, interacts with COCH. In terms of processing, N-glycosylated.

The protein resides in the cell membrane. The protein localises to the mitochondrion outer membrane. The catalysed reaction is choline(out) + n H(+)(in) = choline(in) + n H(+)(out). The enzyme catalyses ethanolamine(out) + n H(+)(in) = ethanolamine(in) + n H(+)(out). Functionally, choline/H+ antiporter, mainly in mitochodria. Also acts as a low-affinity ethanolamine/H+ antiporter, regulating the supply of extracellular ethanolamine (Etn) for the CDP-Etn pathway, redistribute intracellular Etn and balance the CDP-Cho and CDP-Etn arms of the Kennedy pathway. The protein is Choline transporter-like protein 2 (SLC44A2) of Bos taurus (Bovine).